The chain runs to 744 residues: Tripartite motif-containing protein 2 (744 aa).

Residue serine 10 is modified to Phosphoserine. An RING-type zinc finger spans residues 23-64; sequence CSICLERYKNPKVLPCLHTFCERCLQNYIPAHSLTLSCPVCR. The B box-type zinc finger occupies 113–154; the sequence is GKPLSCPNHDGNVMDFYCQSCETAMCRECTEGEHAEHPTVPL. Zn(2+) is bound by residues cysteine 118, histidine 121, cysteine 141, and histidine 146. The stretch at 320–421 is one Filamin repeat; that stretch reads TTNAVASETV…IRGSPFKLKV (102 aa). Threonine 371 bears the Phosphothreonine mark. Phosphoserine occurs at positions 375, 424, and 428. Positions 432–462 are disordered; it reads EGVKRRVKSPGSGHVKQKAVKRPASMYSTGK. NHL repeat units follow at residues 473–516, 520–563, 564–605, 609–652, 656–699, and 700–743; these read IFRV…FSND, KSRF…FSSD, GKFK…FQPN, VTRF…FNQE, MLKF…FDGS, and GSFL…YRYL.

Belongs to the TRIM/RBCC family. In terms of assembly, forms homooligomers. Interacts with TRIM3; this interaction reduces TRIM2 activity. Interacts with myosin V; myosin V may not be a substrate for ubiquitination. Interacts with NEFL. Interacts with phosphorylated BCL2L11. Interacts with SIRPA. Post-translationally, RING-type zinc finger-dependent and UBE2D1-dependent autoubiquitination.

It localises to the cytoplasm. The catalysed reaction is S-ubiquitinyl-[E2 ubiquitin-conjugating enzyme]-L-cysteine + [acceptor protein]-L-lysine = [E2 ubiquitin-conjugating enzyme]-L-cysteine + N(6)-ubiquitinyl-[acceptor protein]-L-lysine.. It functions in the pathway protein modification; protein ubiquitination. In terms of biological role, UBE2D1-dependent E3 ubiquitin-protein ligase that mediates the ubiquitination of NEFL and of phosphorylated BCL2L11. Plays a neuroprotective function. May play a role in neuronal rapid ischemic tolerance. Plays a role in antiviral immunity and limits New World arenavirus infection independently of its ubiquitin ligase activity. In Ailuropoda melanoleuca (Giant panda), this protein is Tripartite motif-containing protein 2 (TRIM2).